The primary structure comprises 340 residues: ATP-dependent 6-phosphofructokinase (340 aa).

An ATP-binding site is contributed by glycine 11. An ADP-binding site is contributed by 21 to 25 (RAVVR). Residues 72–73 (RY) and 102–105 (GDGS) contribute to the ATP site. Aspartate 103 provides a ligand contact to Mg(2+). 125–127 (TID) contributes to the substrate binding site. Residue aspartate 127 is the Proton acceptor of the active site. Arginine 154 is an ADP binding site. Substrate contacts are provided by residues arginine 162 and 169–171 (MGR). ADP-binding positions include 185–187 (GAD), lysine 211, and 213–215 (KNH). Residues glutamate 222, arginine 244, and 250-253 (HIQR) each bind substrate.

Belongs to the phosphofructokinase type A (PFKA) family. ATP-dependent PFK group I subfamily. Prokaryotic clade 'B1' sub-subfamily. As to quaternary structure, homotetramer. It depends on Mg(2+) as a cofactor.

Its subcellular location is the cytoplasm. It catalyses the reaction beta-D-fructose 6-phosphate + ATP = beta-D-fructose 1,6-bisphosphate + ADP + H(+). It participates in carbohydrate degradation; glycolysis; D-glyceraldehyde 3-phosphate and glycerone phosphate from D-glucose: step 3/4. Allosterically activated by ADP and other diphosphonucleosides, and allosterically inhibited by phosphoenolpyruvate. In terms of biological role, catalyzes the phosphorylation of D-fructose 6-phosphate to fructose 1,6-bisphosphate by ATP, the first committing step of glycolysis. The polypeptide is ATP-dependent 6-phosphofructokinase (Lactococcus lactis subsp. lactis (Streptococcus lactis)).